A 610-amino-acid polypeptide reads, in one-letter code: Aspartate--tRNA(Asp/Asn) ligase (610 aa).

L-aspartate is bound at residue E196. Residues 220 to 223 (QIFK) form an aspartate region. R242 contributes to the L-aspartate binding site. Residues 242 to 244 (RDE) and Q251 contribute to the ATP site. H465 contributes to the L-aspartate binding site. Residue E499 coordinates ATP. Residue R506 coordinates L-aspartate. An ATP-binding site is contributed by 551–554 (GMDR).

This sequence belongs to the class-II aminoacyl-tRNA synthetase family. Type 1 subfamily. As to quaternary structure, homodimer.

The protein resides in the cytoplasm. The catalysed reaction is tRNA(Asx) + L-aspartate + ATP = L-aspartyl-tRNA(Asx) + AMP + diphosphate. Aspartyl-tRNA synthetase with relaxed tRNA specificity since it is able to aspartylate not only its cognate tRNA(Asp) but also tRNA(Asn). Reaction proceeds in two steps: L-aspartate is first activated by ATP to form Asp-AMP and then transferred to the acceptor end of tRNA(Asp/Asn). The protein is Aspartate--tRNA(Asp/Asn) ligase of Nitratidesulfovibrio vulgaris (strain ATCC 29579 / DSM 644 / CCUG 34227 / NCIMB 8303 / VKM B-1760 / Hildenborough) (Desulfovibrio vulgaris).